Consider the following 100-residue polypeptide: Small ribosomal subunit protein uS14 (100 aa).

Belongs to the universal ribosomal protein uS14 family. In terms of assembly, part of the 30S ribosomal subunit. Contacts proteins S3 and S10.

Its function is as follows. Binds 16S rRNA, required for the assembly of 30S particles and may also be responsible for determining the conformation of the 16S rRNA at the A site. The sequence is that of Small ribosomal subunit protein uS14 from Gloeothece citriformis (strain PCC 7424) (Cyanothece sp. (strain PCC 7424)).